Reading from the N-terminus, the 537-residue chain is Probable quinate permease (537 aa).

The Cytoplasmic portion of the chain corresponds to 1–22 (MSILSLVEDRPTPKEVYNWKIY). A helical membrane pass occupies residues 23-43 (LLAAVASCTSCMIGYDSAFIG). Residues 44–74 (TTISLQSFKDEFDWDSMSAAHQDLVSSNIVS) are Extracellular-facing. Residues 75–95 (LYQAGAFFGAFFAYPIGHFWG) traverse the membrane as a helical segment. Residues 96–97 (RK) lie on the Cytoplasmic side of the membrane. The chain crosses the membrane as a helical span at residues 98 to 118 (WGLMVSALIFTLGAGIMLGTN). The Extracellular segment spans residues 119–130 (GDRGFGLLYGGR). Residues 131-151 (VLAGLGVGAGSNITPIYISEL) form a helical membrane-spanning segment. Topologically, residues 152-159 (SPPAIRGR) are cytoplasmic. A helical membrane pass occupies residues 160-180 (LVGVYELGWQIGGLVGFWICY). Topologically, residues 181-193 (GVDETLPPSHKQW) are extracellular. Residues 194–214 (IIPFAVQLIPSGLLIIGALFL) traverse the membrane as a helical segment. Over 215 to 285 (KESPRWLFLR…AWTNKKILYR (71 aa)) the chain is Cytoplasmic. The chain crosses the membrane as a helical span at residues 286-306 (LFLGSMLFFWQNGSGINAINY). Topologically, residues 307–325 (YSPTVFKSIGVTGSNTSLF) are extracellular. Residues 326–346 (TTGIFGVVKTVVTFIWLLWLI) traverse the membrane as a helical segment. At 347 to 352 (DRVGRR) the chain is on the cytoplasmic side. The helical transmembrane segment at 353–373 (LLLLIGAAGGSICLWIVGAYI) threads the bilayer. At 374–387 (KIARPSERENKQMD) the chain is on the extracellular side. The chain crosses the membrane as a helical span at residues 388 to 408 (GGGIAAMFFFYLWTVFYTPSW). At 409-456 (NGTPWVINSEMFDPNIRSLAQACAAGSNWLWNFLISRFTPQMFAKMDY) the chain is on the cytoplasmic side. The chain crosses the membrane as a helical span at residues 457–477 (GVYFFFASLMILSIIFVFFLI). Topologically, residues 478 to 537 (PETKGIPLESMDRLFETQPIWRAHGTLLKQIREDEERFRHDLEDSGFVKSTDRQVEVVDA) are extracellular.

It belongs to the major facilitator superfamily. Sugar transporter (TC 2.A.1.1) family. As to quaternary structure, interacts with creB. Post-translationally, ubiquitinated. Deubiquitinated by creB, probably to control its activity or amount.

It localises to the cell membrane. In terms of biological role, integral membrane transporter that imports quinic acid to be catabolized as a carbon source. In Aspergillus flavus (strain ATCC 200026 / FGSC A1120 / IAM 13836 / NRRL 3357 / JCM 12722 / SRRC 167), this protein is Probable quinate permease (qutD).